Here is a 35-residue protein sequence, read N- to C-terminus: Conotoxin Cal6.1g (35 aa).

The propeptide occupies 1–8 (GLSRPSKR). 3 disulfide bridges follow: Cys9–Cys25, Cys16–Cys29, and Cys24–Cys34.

This sequence belongs to the conotoxin O1 superfamily. In terms of tissue distribution, expressed by the venom duct.

It localises to the secreted. Probable neurotoxin with unknown target. Possibly targets ion channels. This chain is Conotoxin Cal6.1g, found in Californiconus californicus (California cone).